Here is a 125-residue protein sequence, read N- to C-terminus: Fluoride-specific ion channel FluC (125 aa).

A run of 4 helical transmembrane segments spans residues 5 to 25 (LLVALGGALGSLLRYGLGALV), 29 to 49 (LGAGFPWSTLFVNALGSFLIG), 66 to 86 (LFLAVGVLGGFTTFSSLSYET), and 95 to 115 (VGKALLYAFGSLFLGLFLAFL). Residues glycine 74 and threonine 77 each contribute to the Na(+) site.

It belongs to the fluoride channel Fluc/FEX (TC 1.A.43) family.

Its subcellular location is the cell inner membrane. It catalyses the reaction fluoride(in) = fluoride(out). Na(+) is not transported, but it plays an essential structural role and its presence is essential for fluoride channel function. Its function is as follows. Fluoride-specific ion channel. Important for reducing fluoride concentration in the cell, thus reducing its toxicity. The sequence is that of Fluoride-specific ion channel FluC from Thermus thermophilus (strain ATCC 27634 / DSM 579 / HB8).